Reading from the N-terminus, the 369-residue chain is Galactose-1-phosphate uridylyltransferase (369 aa).

Residues C54 and C57 each contribute to the Zn(2+) site. Residues A63 and 79 to 80 each bind UDP-alpha-D-glucose; that span reads ND. H127 serves as a coordination point for Zn(2+). N172 contributes to the UDP-alpha-D-glucose binding site. H183 is a Zn(2+) binding site. The Tele-UMP-histidine intermediate role is filled by H185. Residue Q187 participates in UDP-alpha-D-glucose binding. 4 residues coordinate Fe cation: E201, H300, H317, and H319. UDP-alpha-D-glucose-binding positions include 332-335 and 337-338; these read KFCV and FE.

The protein belongs to the galactose-1-phosphate uridylyltransferase type 1 family. In terms of assembly, homodimer. It depends on Zn(2+) as a cofactor.

The enzyme catalyses alpha-D-galactose 1-phosphate + UDP-alpha-D-glucose = alpha-D-glucose 1-phosphate + UDP-alpha-D-galactose. Its pathway is carbohydrate metabolism; galactose metabolism. The sequence is that of Galactose-1-phosphate uridylyltransferase (gal7) from Schizosaccharomyces pombe (strain 972 / ATCC 24843) (Fission yeast).